We begin with the raw amino-acid sequence, 40 residues long: Photosystem II reaction center protein J (40 aa).

A helical transmembrane segment spans residues 8 to 28; the sequence is IPLWLVGTVTGTLVIGLMGIF.

The protein belongs to the PsbJ family. PSII is composed of 1 copy each of membrane proteins PsbA, PsbB, PsbC, PsbD, PsbE, PsbF, PsbH, PsbI, PsbJ, PsbK, PsbL, PsbM, PsbT, PsbX, PsbY, PsbZ, Psb30/Ycf12, at least 3 peripheral proteins of the oxygen-evolving complex and a large number of cofactors. It forms dimeric complexes.

Its subcellular location is the plastid. It is found in the chloroplast thylakoid membrane. One of the components of the core complex of photosystem II (PSII). PSII is a light-driven water:plastoquinone oxidoreductase that uses light energy to abstract electrons from H(2)O, generating O(2) and a proton gradient subsequently used for ATP formation. It consists of a core antenna complex that captures photons, and an electron transfer chain that converts photonic excitation into a charge separation. The polypeptide is Photosystem II reaction center protein J (Psilotum nudum (Whisk fern)).